A 363-amino-acid polypeptide reads, in one-letter code: NAD kinase 1 (363 aa).

Asp68 acts as the Proton acceptor in catalysis. Residues 68–69 (DG), Arg73, 175–176 (ND), Arg186, Asp205, Ala240, and Gln275 contribute to the NAD(+) site.

This sequence belongs to the NAD kinase family. The cofactor is a divalent metal cation.

It localises to the cytoplasm. The enzyme catalyses NAD(+) + ATP = ADP + NADP(+) + H(+). Involved in the regulation of the intracellular balance of NAD and NADP, and is a key enzyme in the biosynthesis of NADP. Catalyzes specifically the phosphorylation on 2'-hydroxyl of the adenosine moiety of NAD to yield NADP. This Streptomyces coelicolor (strain ATCC BAA-471 / A3(2) / M145) protein is NAD kinase 1.